The following is a 206-amino-acid chain: Putative metal transport protein HI_1621 (206 aa).

A run of 6 helical transmembrane segments spans residues 6 to 26 (GVLHTPILLAGAVLAVAGIAV), 38 to 58 (LTALFAAAFFVAGTIHVPVGI), 72 to 92 (FLGWAVFPAFLIALLLQVIFF), 94 to 114 (FGGFAVLGVNLCVMATPAVIA), 136 to 156 (IGAGVIGVGGAGALASFVLML), and 165 to 185 (LVWLLLVSHIPVFILDSIISV).

The protein belongs to the CbiM family.

It is found in the cell membrane. Its function is as follows. May be involved in metal transport. The sequence is that of Putative metal transport protein HI_1621 from Haemophilus influenzae (strain ATCC 51907 / DSM 11121 / KW20 / Rd).